A 172-amino-acid chain; its full sequence is Ribosome maturation factor RimM (172 aa).

The region spanning 100–172 (PGEYYRVDLV…RIVVDWDPGF (73 aa)) is the PRC barrel domain.

The protein belongs to the RimM family. In terms of assembly, binds ribosomal protein uS19.

The protein resides in the cytoplasm. Its function is as follows. An accessory protein needed during the final step in the assembly of 30S ribosomal subunit, possibly for assembly of the head region. Essential for efficient processing of 16S rRNA. May be needed both before and after RbfA during the maturation of 16S rRNA. It has affinity for free ribosomal 30S subunits but not for 70S ribosomes. The protein is Ribosome maturation factor RimM of Methylococcus capsulatus (strain ATCC 33009 / NCIMB 11132 / Bath).